A 428-amino-acid chain; its full sequence is Dihydrolipoyllysine-residue acetyltransferase component of pyruvate dehydrogenase complex (428 aa).

The Lipoyl-binding domain maps to 2 to 77 (AFEFKLPDIG…TVGQTLITLD (76 aa)). Lys43 is subject to N6-lipoyllysine. The tract at residues 88–123 (GQEQEEAKKEEKTETVSKEEKVDAVAPNAPAAEAEA) is disordered. The span at 89–110 (QEQEEAKKEEKTETVSKEEKVD) shows a compositional bias: basic and acidic residues. Positions 111–123 (AVAPNAPAAEAEA) are enriched in low complexity. One can recognise a Peripheral subunit-binding (PSBD) domain in the interval 130 to 167 (IAMPSVRKYAREKGVDIRLVQGTGKNGRVLKEDIDAFL). Residues 177–194 (AAEEKAAPAAAKPATTEG) show a composition bias toward low complexity. Positions 177–201 (AAEEKAAPAAAKPATTEGEFPETRE) are disordered. His399 is a catalytic residue.

The protein belongs to the 2-oxoacid dehydrogenase family. Forms a 60-polypeptide structural core with icosahedral symmetry. The cofactor is (R)-lipoate.

The enzyme catalyses N(6)-[(R)-dihydrolipoyl]-L-lysyl-[protein] + acetyl-CoA = N(6)-[(R)-S(8)-acetyldihydrolipoyl]-L-lysyl-[protein] + CoA. In terms of biological role, the pyruvate dehydrogenase complex catalyzes the overall conversion of pyruvate to acetyl-CoA and CO(2). It contains multiple copies of three enzymatic components: pyruvate dehydrogenase (E1), dihydrolipoamide acetyltransferase (E2) and lipoamide dehydrogenase (E3). This Geobacillus stearothermophilus (Bacillus stearothermophilus) protein is Dihydrolipoyllysine-residue acetyltransferase component of pyruvate dehydrogenase complex (pdhC).